We begin with the raw amino-acid sequence, 596 residues long: uncharacterized protein (596 aa).

In terms of domain architecture, Helicase ATP-binding spans 44 to 203; that stretch reads KYLASQPRDF…PFVTYALDAD (160 aa). In terms of domain architecture, Helicase C-terminal spans 285-432; sequence RLRQLRTHVP…PHRESTDNPL (148 aa). 2 disordered regions span residues 420–444 and 506–533; these read LGKP…QTEQ and EQLQ…SVHG. Positions 510 to 523 are enriched in polar residues; that stretch reads KRTAAQQASSTPDR.

To M.tuberculosis Rv2917.

This is an uncharacterized protein from Mycobacterium leprae (strain TN).